The following is a 245-amino-acid chain: Lactate utilization protein A (245 aa).

This sequence belongs to the LutA/YkgE family.

Its function is as follows. Is involved in L-lactate degradation and allows cells to grow with lactate as the sole carbon source. The protein is Lactate utilization protein A of Exiguobacterium sp. (strain ATCC BAA-1283 / AT1b).